A 255-amino-acid polypeptide reads, in one-letter code: Hydroxyacylglutathione hydrolase (255 aa).

Positions 53, 55, 57, 58, 110, 127, and 165 each coordinate Zn(2+).

This sequence belongs to the metallo-beta-lactamase superfamily. Glyoxalase II family. Monomer. Zn(2+) is required as a cofactor.

The catalysed reaction is an S-(2-hydroxyacyl)glutathione + H2O = a 2-hydroxy carboxylate + glutathione + H(+). It participates in secondary metabolite metabolism; methylglyoxal degradation; (R)-lactate from methylglyoxal: step 2/2. Thiolesterase that catalyzes the hydrolysis of S-D-lactoyl-glutathione to form glutathione and D-lactic acid. The polypeptide is Hydroxyacylglutathione hydrolase (Xanthomonas oryzae pv. oryzae (strain MAFF 311018)).